We begin with the raw amino-acid sequence, 224 residues long: MGAISTATLSGVLLLDKGSGMTSNSALQRARKLLDMRKAGHTGSLDPLASGILPLCFNEATKLSSYLLDSDKRYRVLARLGVTTDTGDADGEVRLRTPVPALDEPALLTVLAGFTGPILQVPPMFSALKHRGKRLYELARKGVEVERPPRPVTVFEIELAGRGADYLELDVHCSKGTYQAVEKVSIEAAMYPFAWVRGRRKPFFSAPTAAWAPPLGAARPFWAH.

Residue Asp46 is the Nucleophile of the active site.

Belongs to the pseudouridine synthase TruB family. Type 1 subfamily.

It catalyses the reaction uridine(55) in tRNA = pseudouridine(55) in tRNA. In terms of biological role, responsible for synthesis of pseudouridine from uracil-55 in the psi GC loop of transfer RNAs. The sequence is that of tRNA pseudouridine synthase B from Methylococcus capsulatus (strain ATCC 33009 / NCIMB 11132 / Bath).